The sequence spans 245 residues: Ribosomal RNA small subunit methyltransferase G (245 aa).

S-adenosyl-L-methionine-binding positions include G90, L95, 140–141, and R158; that span reads AE.

The protein belongs to the methyltransferase superfamily. RNA methyltransferase RsmG family.

Its subcellular location is the cytoplasm. In terms of biological role, specifically methylates the N7 position of guanine in position 518 of 16S rRNA. The protein is Ribosomal RNA small subunit methyltransferase G of Mycobacterium leprae (strain TN).